Consider the following 798-residue polypeptide: Probable DEAD-box ATP-dependent RNA helicase 48 (798 aa).

3 disordered regions span residues 76-100, 117-148, and 236-257; these read KMWG…MSPK, DFWN…NSPI, and FRKN…GKMI. A compositionally biased stretch (low complexity) spans 132–148; sequence GSRSGSDSIDSTSNSPI. Over residues 242–252 the composition is skewed to acidic residues; the sequence is STEEDSDEEGD. Positions 328–356 match the Q motif motif; that stretch reads KRFDESCISPLTLKALSASGILKMTRVQD. One can recognise a Helicase ATP-binding domain in the interval 359 to 543; it reads LSECLDGKDA…QLVLKRDHSY (185 aa). ATP is bound at residue 372–379; sequence AKTGTGKS. The short motif at 491 to 494 is the DEAD box element; the sequence is DEAD. Residues 577–726 enclose the Helicase C-terminal domain; it reads LLKEHINNTP…SIVKHQVDQS (150 aa).

The protein belongs to the DEAD box helicase family.

The enzyme catalyses ATP + H2O = ADP + phosphate + H(+). The protein is Probable DEAD-box ATP-dependent RNA helicase 48 (RH48) of Arabidopsis thaliana (Mouse-ear cress).